A 277-amino-acid chain; its full sequence is Cis-2,3-dihydrobiphenyl-2,3-diol dehydrogenase (277 aa).

Residue 9 to 33 (LITGGASGLGRALVDRFVAERAKVA) participates in NAD(+) binding. Serine 142 serves as a coordination point for substrate. Tyrosine 155 serves as the catalytic Proton acceptor.

The protein belongs to the short-chain dehydrogenases/reductases (SDR) family. In terms of assembly, homotetramer.

It catalyses the reaction (2R,3S)-3-phenylcyclohexa-3,5-diene-1,2-diol + NAD(+) = biphenyl-2,3-diol + NADH + H(+). Its pathway is xenobiotic degradation; biphenyl degradation; 2-hydroxy-2,4-pentadienoate and benzoate from biphenyl: step 2/4. The chain is Cis-2,3-dihydrobiphenyl-2,3-diol dehydrogenase (bphB) from Pseudomonas putida (Arthrobacter siderocapsulatus).